The following is a 291-amino-acid chain: Lys-63-specific deubiquitinase BRCC36-like (291 aa).

In terms of domain architecture, MPN spans 12 to 179 (VYLESDAFLV…YTCFQSVQAS (168 aa)). Residues histidine 122, histidine 124, and aspartate 135 each coordinate Zn(2+). The short motif at 122–135 (HSHPHITVWPSHVD) is the JAMM motif element. Residues 259 to 286 (LQWLEDRLEQNQQRLQELEQEKEDLMEE) are a coiled coil.

Belongs to the peptidase M67A family. BRCC36 subfamily.

Its function is as follows. Metalloprotease that specifically cleaves 'Lys-63'-linked polyubiquitin chains. This is Lys-63-specific deubiquitinase BRCC36-like from Mus musculus (Mouse).